The chain runs to 199 residues: Holliday junction branch migration complex subunit RuvA (199 aa).

Residues 1–64 (MIAFLKGAVF…ENEFKLFGFL (64 aa)) form a domain I region. Residues 65–143 (DQDELRLFKT…ELKLVEVEKE (79 aa)) are domain II. The flexible linker stretch occupies residues 144–148 (QRPLL). The interval 148 to 199 (LDELMEALEILGYSRSEVLPAIMDLNRNKQLGNIVEENIKLVLKAKAQEMRR) is domain III.

This sequence belongs to the RuvA family. As to quaternary structure, homotetramer. Forms an RuvA(8)-RuvB(12)-Holliday junction (HJ) complex. HJ DNA is sandwiched between 2 RuvA tetramers; dsDNA enters through RuvA and exits via RuvB. An RuvB hexamer assembles on each DNA strand where it exits the tetramer. Each RuvB hexamer is contacted by two RuvA subunits (via domain III) on 2 adjacent RuvB subunits; this complex drives branch migration. In the full resolvosome a probable DNA-RuvA(4)-RuvB(12)-RuvC(2) complex forms which resolves the HJ.

It localises to the cytoplasm. Functionally, the RuvA-RuvB-RuvC complex processes Holliday junction (HJ) DNA during genetic recombination and DNA repair, while the RuvA-RuvB complex plays an important role in the rescue of blocked DNA replication forks via replication fork reversal (RFR). RuvA specifically binds to HJ cruciform DNA, conferring on it an open structure. The RuvB hexamer acts as an ATP-dependent pump, pulling dsDNA into and through the RuvAB complex. HJ branch migration allows RuvC to scan DNA until it finds its consensus sequence, where it cleaves and resolves the cruciform DNA. This is Holliday junction branch migration complex subunit RuvA from Syntrophomonas wolfei subsp. wolfei (strain DSM 2245B / Goettingen).